Reading from the N-terminus, the 760-residue chain is UDP-N-acetylmuramoyl-L-alanyl-D-glutamate--2,6-diaminopimelate ligase MurE homolog, chloroplastic (760 aa).

The N-terminal 59 residues, 1-59, are a transit peptide targeting the chloroplast; that stretch reads MATAPLAFRLPFPFSFPSASRPPPSRILAPPTPRRLPLRLAAAAARRFRPPTADDEPPE. 2 disordered regions span residues 13 to 159 and 176 to 205; these read PFSF…TDEL and LSVV…DEDG. Pro residues predominate over residues 20–34; that stretch reads SRPPPSRILAPPTPR. Over residues 53 to 62 the composition is skewed to acidic residues; that stretch reads ADDEPPEAAE. Basic and acidic residues predominate over residues 118-132; sequence EIDRAIAEKREEFTR. Acidic residues-rich tracts occupy residues 150 to 159 and 182 to 205; these read PEDEDLTDEL and ADEE…DEDG.

Belongs to the MurCDEF family. MurE subfamily. As to quaternary structure, component of the plastid-encoded plastid RNA polymerase (PEP) complex.

It is found in the plastid. The protein resides in the chloroplast. Functionally, required for the activity of the plastid-encoded RNA polymerase (PEP) and full expression of genes transcribed by PEP. Required for the proper build-up and formation of the PEP-complex. In Zea mays (Maize), this protein is UDP-N-acetylmuramoyl-L-alanyl-D-glutamate--2,6-diaminopimelate ligase MurE homolog, chloroplastic.